The following is a 2904-amino-acid chain: Highly reducing polyketide synthase bet1 (2904 aa).

The 434-residue stretch at 8–441 (NEPIAIVGSG…GTNAHAIVES (434 aa)) folds into the Ketosynthase family 3 (KS3) domain. Catalysis depends on for beta-ketoacyl synthase activity residues C181, H320, and H361. An acyl transferase (AT) domain region spans residues 553 to 875 (VFTGQGAQYA…PYHGTLLRGG (323 aa)). The N-terminal hotdog fold stretch occupies residues 948–1081 (HQLLGDVSPD…GELKVVLVDE (134 aa)). Positions 948–1257 (HQLLGDVSPD…FKPVGSDASN (310 aa)) constitute a PKS/mFAS DH domain. The segment at 971 to 1255 (PREMTWLEGH…VKFKPVGSDA (285 aa)) is dehydratase (DH) domain. H980 (proton acceptor; for dehydratase activity) is an active-site residue. The C-terminal hotdog fold stretch occupies residues 1098 to 1257 (MIPVQPSRLY…FKPVGSDASN (160 aa)). Residue D1159 is the Proton donor; for dehydratase activity of the active site. The segment at 1411–1596 (KQSTLWVASI…GFSGIDTMSP (186 aa)) is methyltransferase (cMeT) domain. Residues 2125–2298 (TYWLVGLSGA…RSSVVNVGAI (174 aa)) form a ketoreductase (KR)domain region. A Carrier domain is found at 2407-2486 (EVANVIKQAY…SLVELAAESI (80 aa)). The residue at position 2445 (S2445) is an O-(pantetheine 4'-phosphoryl)serine. The disordered stretch occupies residues 2492–2543 (PGVPQANANPNGPSSPDSDATESSNQNSDVDVTSTRATSPSTPAATSPDSNV). Residues 2497–2523 (ANANPNGPSSPDSDATESSNQNSDVDV) show a composition bias toward polar residues. Residues 2524–2541 (TSTRATSPSTPAATSPDS) show a composition bias toward low complexity. The interval 2585–2817 (LTGCSGLLGH…DLVSVETCCE (233 aa)) is reductase (R) domain.

Requires pantetheine 4'-phosphate as cofactor.

It carries out the reaction 7 malonyl-CoA + acetyl-CoA + 10 AH2 + 5 S-adenosyl-L-methionine + 2 H(+) = dehydroprobetaenone I + 10 A + 5 S-adenosyl-L-homocysteine + 7 CO2 + 8 CoA + 6 H2O. It functions in the pathway mycotoxin biosynthesis. Functionally, highly reducing polyketide synthase; part of the gene cluster that mediates the biosynthesis of betaenones, phytotoxic polyketides involved in leaf spot disease in sugar beets. The first step of the pathway is the synthesis of dehydroprobetaenone I by the polyketide synthase bet1 and the enoyl reductase bet3 via condensation of one acetyl-CoA starter unit with 7 malonyl-CoA units and 5 methylations. The C-terminal reductase (R) domain of bet1 catalyzes the reductive release of the polyketide chain. Because bet1 lacks a designated enoylreductase (ER) domain, the required activity is provided the enoyl reductase bet3. The short-chain dehydrogenase/reductase bet4 then catalyzes reduction of dehydroprobetaenone I to probetaenone I. The cytochrome P450 monooxygenase bet2 catalyzes successive epoxidation, oxidation (resulting from epoxide opening) and hydroxylation to install a tertiary alcohol in the decaline ring to yield betaenone C from dehydroprobetaenone I and betaenone B from probetaenone I. The FAD-linked oxidoreductase (orf1) is probably responsible for the conversion of betaenone C to betaenone A via an intramolecular aldol reaction between C-1 and C-17 to form the bridged tricyclic system in betaenone A. The polypeptide is Highly reducing polyketide synthase bet1 (Neocamarosporium betae (Beet black rot fungus)).